The chain runs to 445 residues: Probable phosphoglucosamine mutase (445 aa).

S99 functions as the Phosphoserine intermediate in the catalytic mechanism. Positions 99, 238, 240, and 242 each coordinate Mg(2+). The residue at position 99 (S99) is a Phosphoserine.

It belongs to the phosphohexose mutase family. The cofactor is Mg(2+). Activated by phosphorylation.

It catalyses the reaction alpha-D-glucosamine 1-phosphate = D-glucosamine 6-phosphate. Catalyzes the conversion of glucosamine-6-phosphate to glucosamine-1-phosphate. The chain is Probable phosphoglucosamine mutase from Methanobrevibacter smithii (strain ATCC 35061 / DSM 861 / OCM 144 / PS).